Reading from the N-terminus, the 728-residue chain is Probable subtilase-type serine protease DR_A0283 (728 aa).

An N-terminal signal peptide occupies residues 1 to 22 (MPGALPMKKISLAVLSLTTLLA). Positions 23–148 (ACGQPQTSPQ…RTAQDQLGAQ (126 aa)) are excised as a propeptide. Positions 159 to 471 (QYALDSNHLH…YGLIRMDKLA (313 aa)) constitute a Peptidase S8 domain. Active-site charge relay system residues include Asp-188, His-242, and Ser-412.

This sequence belongs to the peptidase S8 family.

It localises to the secreted. The polypeptide is Probable subtilase-type serine protease DR_A0283 (Deinococcus radiodurans (strain ATCC 13939 / DSM 20539 / JCM 16871 / CCUG 27074 / LMG 4051 / NBRC 15346 / NCIMB 9279 / VKM B-1422 / R1)).